A 242-amino-acid polypeptide reads, in one-letter code: Venom nerve growth factor 3 (242 aa).

The first 18 residues, 1 to 18, serve as a signal peptide directing secretion; sequence MSMLCYTLIIAFLIGIWA. Positions 19 to 125 are excised as a propeptide; the sequence is APQSEDNVPL…ALNRNIQAKR (107 aa). Residues 45 to 69 are disordered; the sequence is HEGLKTSRNTDQRHPAPKKVDDQEP. Positions 46-66 are enriched in basic and acidic residues; it reads EGLKTSRNTDQRHPAPKKVDD. 3 cysteine pairs are disulfide-bonded: Cys139–Cys203, Cys181–Cys231, and Cys191–Cys233.

It belongs to the NGF-beta family. As to quaternary structure, homodimer; non-covalently linked. In terms of tissue distribution, expressed by the venom gland.

Its subcellular location is the secreted. Nerve growth factor is important for the development and maintenance of the sympathetic and sensory nervous systems. It stimulates division and differentiation of sympathetic and embryonic sensory neurons as well as basal forebrain cholinergic neurons in the brain. Its relevance in the snake venom is not clear. However, it has been shown to inhibit metalloproteinase-dependent proteolysis of platelet glycoprotein Ib alpha, suggesting a metalloproteinase inhibition to prevent metalloprotease autodigestion and/or protection against prey proteases. Binds a lipid between the two protein chains in the homodimer. The lipid-bound form promotes histamine relase from mouse mast cells, contrary to the lipid-free form. This chain is Venom nerve growth factor 3, found in Pseudechis australis (Mulga snake).